A 69-amino-acid polypeptide reads, in one-letter code: Sec-independent protein translocase protein TatA (69 aa).

The chain crosses the membrane as a helical span at residues 1 to 21 (MFGLGGQELILILLIILLLFG).

Belongs to the TatA/E family. Forms a complex with TatC.

The protein resides in the cell inner membrane. Its function is as follows. Part of the twin-arginine translocation (Tat) system that transports large folded proteins containing a characteristic twin-arginine motif in their signal peptide across membranes. TatA could form the protein-conducting channel of the Tat system. This is Sec-independent protein translocase protein TatA from Pelodictyon phaeoclathratiforme (strain DSM 5477 / BU-1).